Here is a 335-residue protein sequence, read N- to C-terminus: Deoxyhypusine hydroxylase (335 aa).

HEAT-like PBS-type repeat units follow at residues 71–97, 104–130, 200–233, 238–264, and 271–298; these read LKHELAYCLGQTRNPESVPFLQQVAKD, CRHEAAEALGALGYEDSLEILKALRDN, LRYRAMFALRDLASPPDLPTATRAVEALAKGLKD, FRHEIAFVFGQLCHPASIPSLTEALSN, and VRHEAAEALGSLGDCEGVEETLRKFLND. Fe cation contacts are provided by H73, E74, H106, and E107. H240, E241, H273, and E274 together coordinate Fe cation.

This sequence belongs to the deoxyhypusine hydroxylase family. It depends on Fe(2+) as a cofactor.

Its subcellular location is the cytoplasm. It is found in the nucleus. It catalyses the reaction [eIF5A protein]-deoxyhypusine + AH2 + O2 = [eIF5A protein]-hypusine + A + H2O. It functions in the pathway protein modification; eIF5A hypusination. Functionally, catalyzes the hydroxylation of the N(6)-(4-aminobutyl)-L-lysine intermediate to form hypusine, an essential post-translational modification only found in mature eIF-5A factor. This chain is Deoxyhypusine hydroxylase (lia1), found in Neosartorya fischeri (strain ATCC 1020 / DSM 3700 / CBS 544.65 / FGSC A1164 / JCM 1740 / NRRL 181 / WB 181) (Aspergillus fischerianus).